Consider the following 795-residue polypeptide: Nucleolar complex protein 3 homolog (795 aa).

Disordered stretches follow at residues 1-88, 124-144, and 168-190; these read MKPM…PLDM, RDDV…EPEK, and IPSE…EVPE. Basic and acidic residues-rich tracts occupy residues 22 to 39 and 46 to 58; these read LKLD…ESSA and QKQL…DVRS. The segment covering 74-88 has biased composition (acidic residues); that stretch reads EEEYEVEEESLPLDM. The span at 171–181 shows a compositional bias: acidic residues; that stretch reads EEQEENEEEMD. The stretch at 447 to 492 forms a coiled coil; sequence SYKDKKKNLSRMQRKWKKAEEKLERELLEAEASESKEKKLKLNTET.

Belongs to the CBF/MAK21 family.

It localises to the nucleus. The protein localises to the nucleolus. The chain is Nucleolar complex protein 3 homolog (noc3l) from Xenopus laevis (African clawed frog).